We begin with the raw amino-acid sequence, 947 residues long: Protocadherin alpha-4 (947 aa).

Residues 1-29 (MEFSWGSGQESQRLLLSFLFLAIWEPGNS) form the signal peptide. Cadherin domains lie at 30-133 (QLHY…PPTF), 134-242 (PTTQ…SPVF), 243-350 (DRSL…APEL), 351-455 (EFKS…APAF), 456-565 (AQPE…APTL), and 573-681 (SGGI…APSR). The Extracellular portion of the chain corresponds to 30-697 (QLHYSIPEEA…NAEASLVDVN (668 aa)). A disulfide bond links Cys96 and Cys102. N-linked (GlcNAc...) asparagine glycosylation is found at Asn257 and Asn265. N-linked (GlcNAc...) asparagine glycosylation occurs at Asn548. A helical membrane pass occupies residues 698-718 (VYLIIAICAVSSLLVLTLLLY). Residues 719–947 (SALRCSTVPS…GNSTTDNSDQ (229 aa)) are Cytoplasmic-facing. PXXP repeat units lie at residues 734-737 (PPKP), 774-777 (PSLS), 796-799 (PRQP), 829-832 (PGGP), 870-873 (PGNP), and 888-891 (PGSP). The interval 734 to 891 (PPKPVMVCSS…PDKFIIPGSP (158 aa)) is 6 X 4 AA repeats of P-X-X-P. Residues 738–947 (VMVCSSAVGS…GNSTTDNSDQ (210 aa)) form a required for interaction with FYN region. Disordered stretches follow at residues 761–805 (GEYP…DWRY) and 824–853 (ILRAGPGGPDQQWPTVSSATPEPEAGEVSP). The tract at residues 897–947 (RQESANNQIDKSDFITFGKKEETKKKKKKKKGNKTQEKKEKGNSTTDNSDQ) is disordered. A compositionally biased stretch (basic and acidic residues) spans 906 to 920 (DKSDFITFGKKEETK).

Forms homodimers in trans (molecules expressed by two different cells). Forms promiscuous heterodimers in cis (at the plasma membrane of the same cell) with other protocadherins. Interacts with FYN. Detected in brain.

The protein resides in the cell membrane. Functionally, calcium-dependent cell-adhesion protein involved in cells self-recognition and non-self discrimination. Thereby, it is involved in the establishment and maintenance of specific neuronal connections in the brain. This Rattus norvegicus (Rat) protein is Protocadherin alpha-4.